Reading from the N-terminus, the 245-residue chain is rRNA adenine N-6-methyltransferase (245 aa).

6 residues coordinate S-adenosyl-L-methionine: Asn10, Leu12, Gly37, Glu58, Asp83, and Asn100.

Belongs to the class I-like SAM-binding methyltransferase superfamily. rRNA adenine N(6)-methyltransferase family.

The enzyme catalyses adenosine(2085) in 23S rRNA + 2 S-adenosyl-L-methionine = N(6)-dimethyladenosine(2085) in 23S rRNA + 2 S-adenosyl-L-homocysteine + 2 H(+). Its function is as follows. This protein produces a dimethylation of the adenine residue at position 2085 in 23S rRNA, resulting in reduced affinity between ribosomes and macrolide-lincosamide-streptogramin B antibiotics. The polypeptide is rRNA adenine N-6-methyltransferase (ermBC) (Escherichia coli).